Reading from the N-terminus, the 374-residue chain is tRNA-specific 2-thiouridylase MnmA (374 aa).

Residues G12–S19 and M38 contribute to the ATP site. The interaction with target base in tRNA stretch occupies residues N98–D100. C103 functions as the Nucleophile in the catalytic mechanism. A disulfide bond links C103 and C202. G128 serves as a coordination point for ATP. The segment at K152–Q154 is interaction with tRNA. The Cysteine persulfide intermediate role is filled by C202. The interaction with tRNA stretch occupies residues R316–Y317.

The protein belongs to the MnmA/TRMU family.

The protein resides in the cytoplasm. It carries out the reaction S-sulfanyl-L-cysteinyl-[protein] + uridine(34) in tRNA + AH2 + ATP = 2-thiouridine(34) in tRNA + L-cysteinyl-[protein] + A + AMP + diphosphate + H(+). In terms of biological role, catalyzes the 2-thiolation of uridine at the wobble position (U34) of tRNA, leading to the formation of s(2)U34. This is tRNA-specific 2-thiouridylase MnmA from Vibrio campbellii (strain ATCC BAA-1116).